Here is a 277-residue protein sequence, read N- to C-terminus: 3-methyl-2-oxobutanoate hydroxymethyltransferase (277 aa).

Mg(2+)-binding residues include Asp43 and Asp82. Residues 43 to 44, Asp82, and Lys112 contribute to the 3-methyl-2-oxobutanoate site; that span reads DS. Residue Glu114 coordinates Mg(2+). The active-site Proton acceptor is Glu181.

The protein belongs to the PanB family. Homodecamer; pentamer of dimers. Mg(2+) is required as a cofactor.

The protein resides in the cytoplasm. The catalysed reaction is 3-methyl-2-oxobutanoate + (6R)-5,10-methylene-5,6,7,8-tetrahydrofolate + H2O = 2-dehydropantoate + (6S)-5,6,7,8-tetrahydrofolate. It participates in cofactor biosynthesis; (R)-pantothenate biosynthesis; (R)-pantoate from 3-methyl-2-oxobutanoate: step 1/2. Functionally, catalyzes the reversible reaction in which hydroxymethyl group from 5,10-methylenetetrahydrofolate is transferred onto alpha-ketoisovalerate to form ketopantoate. The sequence is that of 3-methyl-2-oxobutanoate hydroxymethyltransferase from Listeria innocua serovar 6a (strain ATCC BAA-680 / CLIP 11262).